Reading from the N-terminus, the 373-residue chain is MTQNTKLRPITPEFDPWEAYMDVDQYGDMQLTNVEFTTTTLCNMRCEHCAVGYTLQPKDPNALPIDLLLKRLEEIPRLRSISITGGEPMLSLKSVKEYVVPLLKYAHERGVRTQINSNLTLDIERYEWIIPYLDVLHISHNWGTVEDFAEIGFAMMDRKPTFEQRARYFEKMIENSRTLVDAGVMVSAETMLNKRTLPHIEHIHRQITEDMKCQRHEVHPMYPSDFASALESLSLKEMRQAIHRLLDIRDENTWMLFGTLPFYACSPDEDDQKLLRRLRAAKNVTVRNDPDGRSRLNVNIFDGNIIVTDFGDTPPLGNIQTDSLPSAYEKWRETKLAKELSCHCPNVRCLGPNVLVKNSYYQDTDFTKRQARS.

One can recognise a Radical SAM core domain in the interval tyrosine 26–leucine 256. The [4Fe-4S] cluster site is built by cysteine 42, cysteine 46, and cysteine 49.

This sequence belongs to the radical SAM superfamily. The cofactor is [4Fe-4S] cluster.

This Bacillus subtilis (strain 168) protein is Putative protein YfkA (yfkA).